We begin with the raw amino-acid sequence, 257 residues long: 5-oxoprolinase subunit A (257 aa).

This sequence belongs to the LamB/PxpA family. Forms a complex composed of PxpA, PxpB and PxpC.

It carries out the reaction 5-oxo-L-proline + ATP + 2 H2O = L-glutamate + ADP + phosphate + H(+). Functionally, catalyzes the cleavage of 5-oxoproline to form L-glutamate coupled to the hydrolysis of ATP to ADP and inorganic phosphate. This Fusobacterium nucleatum subsp. nucleatum (strain ATCC 25586 / DSM 15643 / BCRC 10681 / CIP 101130 / JCM 8532 / KCTC 2640 / LMG 13131 / VPI 4355) protein is 5-oxoprolinase subunit A.